Reading from the N-terminus, the 231-residue chain is NADH-ubiquinone oxidoreductase chain 4 (231 aa).

The next 6 helical transmembrane spans lie at 1–21, 34–54, 63–85, 89–111, 128–148, and 156–176; these read PIAGSMVLAAILLKLGGYGII, LFLPFIVLALWGAILANLTCL, IAYSSISHMGLVVAAIIIQTPWG, AMALMIAHGFTSSALFCLANTTY, ILPMTTTWWLMTNLMNIAIPP, and LLIMSALFNWCPATIIMLGLS.

It belongs to the complex I subunit 4 family.

It is found in the mitochondrion membrane. It carries out the reaction a ubiquinone + NADH + 5 H(+)(in) = a ubiquinol + NAD(+) + 4 H(+)(out). Core subunit of the mitochondrial membrane respiratory chain NADH dehydrogenase (Complex I) that is believed to belong to the minimal assembly required for catalysis. Complex I functions in the transfer of electrons from NADH to the respiratory chain. The immediate electron acceptor for the enzyme is believed to be ubiquinone. The protein is NADH-ubiquinone oxidoreductase chain 4 (MT-ND4) of Crotalus concolor (Midget faded rattlesnake).